A 162-amino-acid chain; its full sequence is UPF0262 protein Acry_0160 (162 aa).

This sequence belongs to the UPF0262 family.

In Acidiphilium cryptum (strain JF-5), this protein is UPF0262 protein Acry_0160.